A 215-amino-acid polypeptide reads, in one-letter code: Cytochrome b6 (215 aa).

Residues 32–52 (IFYCLGGIVFVSFLIQVATGF) traverse the membrane as a helical segment. Cys35 contributes to the heme c binding site. Heme b-binding residues include His86 and His100. The next 3 helical transmembrane spans lie at 90 to 110 (ASMMVLMMILHVFRVYLTGGF), 116 to 136 (LTWVTGVILGVLTVSFGVTGY), and 186 to 206 (LHTFVLPLLTAVFMLMHFLMI). Heme b contacts are provided by His187 and His202.

This sequence belongs to the cytochrome b family. PetB subfamily. In terms of assembly, the 4 large subunits of the cytochrome b6-f complex are cytochrome b6, subunit IV (17 kDa polypeptide, PetD), cytochrome f and the Rieske protein, while the 4 small subunits are PetG, PetL, PetM and PetN. The complex functions as a dimer. It depends on heme b as a cofactor. Requires heme c as cofactor.

Its subcellular location is the plastid. It is found in the chloroplast thylakoid membrane. Its function is as follows. Component of the cytochrome b6-f complex, which mediates electron transfer between photosystem II (PSII) and photosystem I (PSI), cyclic electron flow around PSI, and state transitions. This Porphyra purpurea (Red seaweed) protein is Cytochrome b6.